The primary structure comprises 703 residues: Collagen alpha-2(VIII) chain (703 aa).

The first 28 residues, M1–S28, serve as a signal peptide directing secretion. Positions G29–K76 are nonhelical region (NC2). Residues L70 to L544 form a disordered region. Residues G77 to F536 are triple-helical region. A compositionally biased stretch (pro residues) spans P79–P97. Positions P166–P192 are enriched in low complexity. A compositionally biased stretch (gly residues) spans G206 to A224. Low complexity-rich tracts occupy residues E265–P275 and A285–A297. The span at G433 to G442 shows a compositional bias: gly residues. 2 stretches are compositionally biased toward low complexity: residues L444–S462 and P476–P486. The segment covering T506–A532 has biased composition (pro residues). The nonhelical region (NC1) stretch occupies residues D537 to T703. In terms of domain architecture, C1q spans S570–T703.

Homotrimers, or heterotrimers in association with alpha 2(VIII) type collagens. Four homotrimers can form a tetrahedron stabilized by central interacting C-terminal NC1 trimers. Post-translationally, proteolytically cleaved by neutrophil elastase, in vitro. In terms of processing, prolines at the third position of the tripeptide repeating unit (G-X-Y) are hydroxylated in some or all of the chains. Expressed primarily in the subendothelium of large blood vessels. Also expressed in arterioles and venules in muscle, heart, kidney, spleen, umbilical cord, liver and lung and is also found in connective tissue layers around hair follicles, around nerve bundles in muscle, in the dura of the optic nerve, in cornea and sclera, and in the perichondrium of cartilaginous tissues. In the kidney, expressed in mesangial cells, glomerular endothelial cells, and tubular epithelial cells. Also expressed in mast cells, and in astrocytes during the repair process. Expressed in Descemet's membrane.

It is found in the secreted. The protein resides in the extracellular space. Its subcellular location is the extracellular matrix. It localises to the basement membrane. Macromolecular component of the subendothelium. Major component of the Descemet's membrane (basement membrane) of corneal endothelial cells. Also a component of the endothelia of blood vessels. Necessary for migration and proliferation of vascular smooth muscle cells and thus, has a potential role in the maintenance of vessel wall integrity and structure, in particular in atherogenesis. This is Collagen alpha-2(VIII) chain (COL8A2) from Homo sapiens (Human).